Reading from the N-terminus, the 465-residue chain is Sorting nexin-8 (465 aa).

Residues 1–19 (MTGRAMDPLPAAAVGAAAE) are compositionally biased toward low complexity. The interval 1–36 (MTGRAMDPLPAAAVGAAAEAEADEEADPPASDLPTP) is disordered. The PX domain occupies 73-181 (ARDTVQVELI…KLFLSFSGSD (109 aa)). Residues Arg109, Lys135, and Arg148 each coordinate a 1,2-diacyl-sn-glycero-3-phospho-(1D-myo-inositol-3-phosphate). Phosphothreonine is present on Thr452. A Phosphoserine modification is found at Ser456.

It belongs to the sorting nexin family.

It localises to the early endosome membrane. Functionally, may be involved in several stages of intracellular trafficking. May play a role in intracellular protein transport from early endosomes to the trans-Golgi network. This chain is Sorting nexin-8 (SNX8), found in Homo sapiens (Human).